The primary structure comprises 514 residues: MEDSEFLAYVELLDEVEQGSVRAKASSVSLHAERTWMEKMKVEDLNVCEPASPAPEAPATSLLNDLKYSPSEEEEVTYTVINQFQQKFGAAILHIKKQNVLSVAAEGANVCRHGKLCWLQVATNCRVYLFDIFLLGSRAFHNGLQMILEDKRILKVIHDCRWLSDCLSHQYGILLNNVFDTQVADVLQFSMETGGYLPNCITTLQESLIKHLQVAPKYLSFLEKRQKLIQENPEVWFIRPVSPSLLKILALEATYLLPLRLALLDEMMSDLTTLVDGYLNTYREGSADRLGGTEPTCMELPEELLQLKDFQKQRREKAAREYRVNAQGLLIRTVLQPKKLVTETAGKEEKVKGFLFGKNFRIDKAPSFTSQDFHGDVNLLKEESLNKQATNPQHLPPTEEGETSEDSSNKLICTKSKGSEDQRITQKEHFMTPKHEFQASLSLKEETEQLLMVENKEDLKCTKQAVSMSSFPQETRVSPSDTFYPIRKTVVSTLPPCPALEKIDSWISPFLNLP.

One can recognise a 3'-5' exonuclease domain in the interval 30 to 122; it reads LHAERTWMEK…HGKLCWLQVA (93 aa). A disordered region spans residues 384 to 422; that stretch reads SLNKQATNPQHLPPTEEGETSEDSSNKLICTKSKGSEDQ.

It belongs to the EXD1 family. As to quaternary structure, homodimer. Component of the PET complex, at least composed of EXD1, PIWIL2, TDRD12 and piRNAs.

The protein localises to the cytoplasm. RNA-binding component of the PET complex, a multiprotein complex required for the processing of piRNAs during spermatogenesis. The piRNA metabolic process mediates the repression of transposable elements during meiosis by forming complexes composed of piRNAs and Piwi proteins and governs the methylation and subsequent repression of transposable elements, preventing their mobilization, which is essential for the germline integrity. The PET complex is required during the secondary piRNAs metabolic process for the PIWIL2 slicing-triggered loading of PIWIL4 piRNAs. In the PET complex, EXD1 probably acts as an RNA adapter. EXD1 is an inactive exonuclease. The chain is piRNA biogenesis protein EXD1 (EXD1) from Homo sapiens (Human).